Here is a 507-residue protein sequence, read N- to C-terminus: Maturase K (507 aa).

Belongs to the intron maturase 2 family. MatK subfamily.

It is found in the plastid. It localises to the chloroplast. Usually encoded in the trnK tRNA gene intron. Probably assists in splicing its own and other chloroplast group II introns. The polypeptide is Maturase K (Liriodendron tulipifera (Tuliptree)).